We begin with the raw amino-acid sequence, 398 residues long: MVATAWANAREQVSLDPAVTNLNAGSCGPLPRPVFDRVTVRARMAAGPMDFLSRQLPPLLWTARERLAGYLGARPERLAFATNVTGAVNLVASSVQPHLAAGGEILLSDQEYAPMRWCWERVARHQGLVVRTFRLPVQPLGSPDEVVEAATAAMGPRTRLLFFSHVVSSTGLVLPATRLCEEARRRGVLTVVDGAQAPGFTDLDLAALPCDYYAGSGHKWLLAPTGVGFLHFAEDQGGVLRPPQVSWGYRPDGENPSDERNRFGSTDRLRNLECEGTRDLCPWLAVPSAIDFQAGLGHGRVRERMRELAAFTRERLSGWRGLEPVTPAHPGLSGAMTAFRLPPGTDTAGLRHGLWDRFRIDVPVLDRPDGPLLRVSTHFYNTETEVERLAEALKELSK.

Residue Lys-219 is modified to N6-(pyridoxal phosphate)lysine. The segment at 243–264 (PQVSWGYRPDGENPSDERNRFG) is disordered. Residues 251-264 (PDGENPSDERNRFG) are compositionally biased toward basic and acidic residues.

This sequence belongs to the class-V pyridoxal-phosphate-dependent aminotransferase family. The cofactor is pyridoxal 5'-phosphate.

It catalyses the reaction isopenicillin N = penicillin N. It functions in the pathway antibiotic biosynthesis; cephalosporin C biosynthesis. In terms of biological role, catalyzes the reversible isomerization between isopenicillin N and penicillin N. This Amycolatopsis lactamdurans (Nocardia lactamdurans) protein is Isopenicillin N epimerase (cefD).